Consider the following 406-residue polypeptide: COP9 signalosome complex subunit 4 (406 aa).

A2 carries the post-translational modification N-acetylalanine. N6-acetyllysine is present on K25. One can recognise a PCI domain in the interval 197 to 366; sequence YRRKFIEAAQ…GIVHFETREA (170 aa).

It belongs to the CSN4 family. In terms of assembly, component of the CSN complex, composed of COPS1/GPS1, COPS2, COPS3, COPS4, COPS5, COPS6, COPS7 (COPS7A or COPS7B), COPS8 and COPS9. In the complex, it probably interacts directly with COPS1, COPS2, COPS3, COPS5, COPS6, COPS7 (COPS7A or COPS7B) and COPS8. Interacts with TOR1A; the interaction is direct and associates TOR1A and SNAPIN with the CSN complex. Interacts with STON2; controls STON2 neddylation levels. Interacts with ERCC6.

The protein localises to the cytoplasm. Its subcellular location is the nucleus. The protein resides in the cytoplasmic vesicle. It localises to the secretory vesicle. It is found in the synaptic vesicle. In terms of biological role, component of the COP9 signalosome complex (CSN), a complex involved in various cellular and developmental processes. The CSN complex is an essential regulator of the ubiquitin (Ubl) conjugation pathway by mediating the deneddylation of the cullin subunits of SCF-type E3 ligase complexes, leading to decrease the Ubl ligase activity of SCF-type complexes such as SCF, CSA or DDB2. Also involved in the deneddylation of non-cullin subunits such as STON2. The complex is also involved in phosphorylation of p53/TP53, c-jun/JUN, IkappaBalpha/NFKBIA, ITPK1, IRF8/ICSBP and SNAPIN, possibly via its association with CK2 and PKD kinases. CSN-dependent phosphorylation of TP53 and JUN promotes and protects degradation by the Ubl system, respectively. This Pongo abelii (Sumatran orangutan) protein is COP9 signalosome complex subunit 4 (COPS4).